We begin with the raw amino-acid sequence, 134 residues long: Postmeiotic segregation increased 2-like protein 5 (134 aa).

Belongs to the DNA mismatch repair MutL/HexB family.

The sequence is that of Postmeiotic segregation increased 2-like protein 5 (PMS2P5) from Homo sapiens (Human).